Reading from the N-terminus, the 340-residue chain is MLRKIEEIKNECQARLSQVSSMEELNEFRIKTLGRKGEVTLLLRGLKDLSGEEKARAGRVANELKQNLEQMLREKIDAFKLDELEQKLLQEKIDVTLPGLPRQRGRQHPLTQITREIQDIFIGMGFTVAEGPEIELDYYNFEALNVPRDHPARDMQDSFYISEELLLRTHTSPVQVRTMEKMAPQIPIKIIVPGKVYRKDDDATHSPMFHQVEGLVIGQRITFAHLKGTLVRFAHQVFGEDVTVRYRPSFFPFTEPSAEMDISCVMCQGEGCRVCSHTGWLEILGAGMVNPRVLQYGGYDPEEVTGFAFGMGIERIAMLKYGINDLRLFFENDKRFLAQF.

Glu255 is a binding site for Mg(2+).

It belongs to the class-II aminoacyl-tRNA synthetase family. Phe-tRNA synthetase alpha subunit type 1 subfamily. As to quaternary structure, tetramer of two alpha and two beta subunits. It depends on Mg(2+) as a cofactor.

Its subcellular location is the cytoplasm. It catalyses the reaction tRNA(Phe) + L-phenylalanine + ATP = L-phenylalanyl-tRNA(Phe) + AMP + diphosphate + H(+). The sequence is that of Phenylalanine--tRNA ligase alpha subunit from Syntrophomonas wolfei subsp. wolfei (strain DSM 2245B / Goettingen).